The sequence spans 123 residues: Large ribosomal subunit protein bL12 (123 aa).

This sequence belongs to the bacterial ribosomal protein bL12 family. In terms of assembly, homodimer. Part of the ribosomal stalk of the 50S ribosomal subunit. Forms a multimeric L10(L12)X complex, where L10 forms an elongated spine to which 2 to 4 L12 dimers bind in a sequential fashion. Binds GTP-bound translation factors.

Forms part of the ribosomal stalk which helps the ribosome interact with GTP-bound translation factors. Is thus essential for accurate translation. This Zymomonas mobilis subsp. mobilis (strain ATCC 31821 / ZM4 / CP4) protein is Large ribosomal subunit protein bL12.